Here is a 283-residue protein sequence, read N- to C-terminus: Bifunctional protein FolD (283 aa).

NADP(+)-binding positions include 164 to 166 (GRS), Ser189, and Ile230.

This sequence belongs to the tetrahydrofolate dehydrogenase/cyclohydrolase family. In terms of assembly, homodimer.

It catalyses the reaction (6R)-5,10-methylene-5,6,7,8-tetrahydrofolate + NADP(+) = (6R)-5,10-methenyltetrahydrofolate + NADPH. The enzyme catalyses (6R)-5,10-methenyltetrahydrofolate + H2O = (6R)-10-formyltetrahydrofolate + H(+). The protein operates within one-carbon metabolism; tetrahydrofolate interconversion. Catalyzes the oxidation of 5,10-methylenetetrahydrofolate to 5,10-methenyltetrahydrofolate and then the hydrolysis of 5,10-methenyltetrahydrofolate to 10-formyltetrahydrofolate. This Lacticaseibacillus casei (strain BL23) (Lactobacillus casei) protein is Bifunctional protein FolD.